The following is a 3184-amino-acid chain: WD repeat- and FYVE domain-containing protein 4 (3184 aa).

Positions 1–18 (MEAEDLSKAEDRNEDPGS) are enriched in basic and acidic residues. Disordered regions lie at residues 1–39 (MEAEDLSKAEDRNEDPGSKNEGQLAAVQPDVPHGGQSSS), 944–993 (SHTH…QDST), 1837–1869 (VGAESTRNTSSPEAAAEGDSTVEGLQAPTKAHP), and 2309–2335 (ALSSGRHKESQDKNDHISQTNAENQDE). A compositionally biased stretch (polar residues) spans 981-993 (QAPQPLGESQDST). Residues 2314–2324 (RHKESQDKNDH) are compositionally biased toward basic and acidic residues. Residues 2385-2510 (LDKEKVTQKF…DRSKAFKSFC (126 aa)) enclose the BEACH-type PH domain. A BEACH domain is found at 2527–2821 (SLRRYPGSDR…QLFTKPHPAR (295 aa)). WD repeat units follow at residues 2863 to 2922 (MYLF…YGSD), 2923 to 2972 (KVLM…PRGL), 2973 to 3014 (RLRQ…LDHL), 3015 to 3057 (THVT…GQPL), 3058 to 3141 (ASIT…ELDV), and 3142 to 3184 (SIAL…SADG). Positions 3107–3128 (SVPGRPAGEEPPAQPPSPRGHK) are disordered.

Interacts with HSP90AB1.

The protein localises to the early endosome. The protein resides in the endoplasmic reticulum. Plays a critical role in the regulation of cDC1-mediated cross-presentation of viral and tumor antigens in dendritic cells. Mechanistically, acts near the plasma membrane and interacts with endosomal membranes to promote endosomal-to-cytosol antigen trafficking. Also plays a role in B-cell survival through regulation of autophagy. This Homo sapiens (Human) protein is WD repeat- and FYVE domain-containing protein 4 (WDFY4).